The sequence spans 214 residues: uncharacterized protein (214 aa).

Residues 1–194 (MVSANREMAV…MHYSEYLSYV (194 aa)) enclose the AMMECR1 domain.

This is an uncharacterized protein from Arabidopsis thaliana (Mouse-ear cress).